Reading from the N-terminus, the 165-residue chain is Pro-MCH (165 aa).

The N-terminal stretch at 1–21 (MAKMTLSSYMLMLAFSLFSQG) is a signal peptide. The disordered stretch occupies residues 66-89 (YKNDESGFMNDDDNKNSKNTGSKQ). Ile-143 bears the Isoleucine amide mark. Cys-153 and Cys-162 form a disulfide bridge.

This sequence belongs to the MCH family. Post-translationally, pro-MCH is processed differentially in the brain and in peripheral organs producing two neuropeptides; NEI and MCH. A third peptide, NGE, may also be produced. Preferential processing in neurons by prohormone convertase 2 (PC2) generates NEI. MCH is generated in neurons of the lateral hypothalmic area by several prohormone convertases including PC1/3, PC2 and PC5/6. In terms of tissue distribution, predominantly expressed in hypothalamus. Also found in heart, intestine, spleen and testis (spermatogonia, early spermatocytes and Sertoli cells). In brain only mature MCH and NEI peptides are present. In peripheral tissues a large product, encompassing the NEI and MCH domains of the precursor, is found predominantly.

It localises to the secreted. In terms of biological role, MCH may act as a neurotransmitter or neuromodulator in a broad array of neuronal functions directed toward the regulation of goal-directed behavior, such as food intake, and general arousal. This Mus musculus (Mouse) protein is Pro-MCH (Pmch).